Reading from the N-terminus, the 255-residue chain is Thiazole synthase (255 aa).

Lys-96 functions as the Schiff-base intermediate with DXP in the catalytic mechanism. 1-deoxy-D-xylulose 5-phosphate is bound by residues Gly-157, 183–184 (AG), and 205–206 (NT).

The protein belongs to the ThiG family. In terms of assembly, homotetramer. Forms heterodimers with either ThiH or ThiS.

It is found in the cytoplasm. The enzyme catalyses [ThiS sulfur-carrier protein]-C-terminal-Gly-aminoethanethioate + 2-iminoacetate + 1-deoxy-D-xylulose 5-phosphate = [ThiS sulfur-carrier protein]-C-terminal Gly-Gly + 2-[(2R,5Z)-2-carboxy-4-methylthiazol-5(2H)-ylidene]ethyl phosphate + 2 H2O + H(+). The protein operates within cofactor biosynthesis; thiamine diphosphate biosynthesis. Catalyzes the rearrangement of 1-deoxy-D-xylulose 5-phosphate (DXP) to produce the thiazole phosphate moiety of thiamine. Sulfur is provided by the thiocarboxylate moiety of the carrier protein ThiS. In vitro, sulfur can be provided by H(2)S. The chain is Thiazole synthase from Geobacillus thermodenitrificans (strain NG80-2).